The chain runs to 101 residues: DNA-binding protein Fis (101 aa).

The segment at residues 77 to 96 is a DNA-binding region (H-T-H motif); that stretch reads QTRAANMLGINRGTLRKKLK.

Belongs to the transcriptional regulatory Fis family. Homodimer.

Activates ribosomal RNA transcription. Plays a direct role in upstream activation of rRNA promoters. The sequence is that of DNA-binding protein Fis from Shewanella frigidimarina (strain NCIMB 400).